The sequence spans 788 residues: Endonuclease MutS2 (788 aa).

332 to 339 (GPNTGGKT) lines the ATP pocket. In terms of domain architecture, Smr spans 713-788 (VDLRGMDAEE…GTGVTVVELK (76 aa)).

It belongs to the DNA mismatch repair MutS family. MutS2 subfamily. Homodimer. Binds to stalled ribosomes, contacting rRNA.

Functionally, endonuclease that is involved in the suppression of homologous recombination and thus may have a key role in the control of bacterial genetic diversity. In terms of biological role, acts as a ribosome collision sensor, splitting the ribosome into its 2 subunits. Detects stalled/collided 70S ribosomes which it binds and splits by an ATP-hydrolysis driven conformational change. Acts upstream of the ribosome quality control system (RQC), a ribosome-associated complex that mediates the extraction of incompletely synthesized nascent chains from stalled ribosomes and their subsequent degradation. Probably generates substrates for RQC. This chain is Endonuclease MutS2, found in Clostridium botulinum (strain Kyoto / Type A2).